The chain runs to 154 residues: Large ribosomal subunit protein uL13 (154 aa).

The protein belongs to the universal ribosomal protein uL13 family. Part of the 50S ribosomal subunit.

In terms of biological role, this protein is one of the early assembly proteins of the 50S ribosomal subunit, although it is not seen to bind rRNA by itself. It is important during the early stages of 50S assembly. This Rhodopseudomonas palustris (strain ATCC BAA-98 / CGA009) protein is Large ribosomal subunit protein uL13.